A 465-amino-acid chain; its full sequence is Catalase cnsD (465 aa).

His-39 is an active-site residue. Residue Tyr-331 participates in heme binding.

Belongs to the catalase family. It depends on heme as a cofactor.

Its pathway is alkaloid biosynthesis. Its function is as follows. Catalase; part of the gene cluster that mediates the biosynthesis of communesins, a prominent class of indole alkaloids with great potential as pharmaceuticals. Communesins are biosynthesized by the coupling of tryptamine and aurantioclavine, two building blocks derived from L-tryptophan. The L-tryptophan decarboxylase cnsB converts L-tryptophan to tryptamine, whereas the tryptophan dimethylallyltransferase cnsF converts L-tryptophan to 4-dimethylallyl tryptophan which is further transformed to aurantioclavine by the aurantioclavine synthase cnsA, probably aided by the catalase cnsD. The cytochrome P450 monooxygenase cnsC catalyzes the heterodimeric coupling between the two different indole moieties, tryptamine and aurantioclavine, to construct vicinal quaternary stereocenters and yield the heptacyclic communesin scaffold. The O-methyltransferase cnsE then methylates the communesin scaffold to produce communesin K, the simplest characterized communesin that contains the heptacyclic core. The dioxygenase cnsJ converts communesin K into communesin I. Acylation to introduce the hexadienyl group at position N16 of communesin I by the acyltransferase cnsK leads to the production of communesin B. The hexadienyl group is produced by the highly reducing polyketide synthase cnsI, before being hydrolytically removed from cnsI by the serine hydrolase cnsH, converted into hexadienyl-CoA by the CoA ligase cnsG, and then transferred to communesin I by cnsK. Surprisingly, cnsK may also be a promiscuous acyltransferase that can tolerate a range of acyl groups, including acetyl-, propionyl-, and butyryl-CoA, which lead to communesins A, G and H respectively. The roles of the alpha-ketoglutarate-dependent dioxygenases cnsM and cnsP have still to be determined. This Penicillium expansum (Blue mold rot fungus) protein is Catalase cnsD.